The sequence spans 255 residues: Acetyl-coenzyme A carboxylase carboxyl transferase subunit alpha (255 aa).

A CoA carboxyltransferase C-terminal domain is found at 1 to 235 (MNIAKIVREA…KKELQTELAR (235 aa)).

The protein belongs to the AccA family. In terms of assembly, acetyl-CoA carboxylase is a heterohexamer composed of biotin carboxyl carrier protein (AccB), biotin carboxylase (AccC) and two subunits each of ACCase subunit alpha (AccA) and ACCase subunit beta (AccD).

The protein resides in the cytoplasm. The catalysed reaction is N(6)-carboxybiotinyl-L-lysyl-[protein] + acetyl-CoA = N(6)-biotinyl-L-lysyl-[protein] + malonyl-CoA. It functions in the pathway lipid metabolism; malonyl-CoA biosynthesis; malonyl-CoA from acetyl-CoA: step 1/1. Component of the acetyl coenzyme A carboxylase (ACC) complex. First, biotin carboxylase catalyzes the carboxylation of biotin on its carrier protein (BCCP) and then the CO(2) group is transferred by the carboxyltransferase to acetyl-CoA to form malonyl-CoA. This is Acetyl-coenzyme A carboxylase carboxyl transferase subunit alpha from Streptococcus pneumoniae (strain CGSP14).